We begin with the raw amino-acid sequence, 1068 residues long: Carbamoyl phosphate synthase large chain (1068 aa).

The interval 1–403 (MPKRTDINTI…SLQKALRGLE (403 aa)) is carboxyphosphate synthetic domain. Positions 129, 169, 175, 176, 208, 210, 215, 241, 242, 243, 285, and 299 each coordinate ATP. Residues 133–328 (KEAMEKIGLS…IAKVAAKLAV (196 aa)) form the ATP-grasp 1 domain. Mg(2+) contacts are provided by Gln285, Glu299, and Asn301. Positions 285, 299, and 301 each coordinate Mn(2+). The tract at residues 404-548 (TGICGFNLMS…YSTYEEECES (145 aa)) is oligomerization domain. Residues 549–930 (RPSDKKKIMI…AFLKAQLGAN (382 aa)) form a carbamoyl phosphate synthetic domain region. The region spanning 673–864 (QQILHKLHLK…LAKIAARVMA (192 aa)) is the ATP-grasp 2 domain. The ATP site is built by Arg709, His748, Leu750, Glu755, Gly780, Ile781, His782, Ser783, Gln823, and Glu835. 3 residues coordinate Mg(2+): Gln823, Glu835, and Asn837. Mn(2+)-binding residues include Gln823, Glu835, and Asn837. One can recognise an MGS-like domain in the interval 931–1068 (ERIPKTGKVF…SLQDLHQRLL (138 aa)). The tract at residues 931–1068 (ERIPKTGKVF…SLQDLHQRLL (138 aa)) is allosteric domain.

Belongs to the CarB family. In terms of assembly, composed of two chains; the small (or glutamine) chain promotes the hydrolysis of glutamine to ammonia, which is used by the large (or ammonia) chain to synthesize carbamoyl phosphate. Tetramer of heterodimers (alpha,beta)4. It depends on Mg(2+) as a cofactor. The cofactor is Mn(2+).

The enzyme catalyses hydrogencarbonate + L-glutamine + 2 ATP + H2O = carbamoyl phosphate + L-glutamate + 2 ADP + phosphate + 2 H(+). It catalyses the reaction hydrogencarbonate + NH4(+) + 2 ATP = carbamoyl phosphate + 2 ADP + phosphate + 2 H(+). It participates in amino-acid biosynthesis; L-arginine biosynthesis; carbamoyl phosphate from bicarbonate: step 1/1. The protein operates within pyrimidine metabolism; UMP biosynthesis via de novo pathway; (S)-dihydroorotate from bicarbonate: step 1/3. Large subunit of the glutamine-dependent carbamoyl phosphate synthetase (CPSase). CPSase catalyzes the formation of carbamoyl phosphate from the ammonia moiety of glutamine, carbonate, and phosphate donated by ATP, constituting the first step of 2 biosynthetic pathways, one leading to arginine and/or urea and the other to pyrimidine nucleotides. The large subunit (synthetase) binds the substrates ammonia (free or transferred from glutamine from the small subunit), hydrogencarbonate and ATP and carries out an ATP-coupled ligase reaction, activating hydrogencarbonate by forming carboxy phosphate which reacts with ammonia to form carbamoyl phosphate. The chain is Carbamoyl phosphate synthase large chain from Pasteurella multocida (strain Pm70).